The sequence spans 622 residues: Low affinity potassium transport system protein Kup (622 aa).

12 consecutive transmembrane segments (helical) span residues 9–29 (LPAI…TSPL), 49–69 (VFGF…IKYL), 103–123 (VIMG…TPAI), 137–157 (PQLD…LFMI), 165–185 (VGKL…GLGL), 213–233 (VSFI…ALYA), 247–267 (WFTV…ALLL), 276–296 (PFFL…AALA), 337–357 (IYIP…IVSF), 363–383 (LAAA…ILST), 396–416 (FVAL…TANL), and 419–439 (LLSG…VMTT).

Belongs to the HAK/KUP transporter (TC 2.A.72) family.

Its subcellular location is the cell inner membrane. The catalysed reaction is K(+)(in) + H(+)(in) = K(+)(out) + H(+)(out). Responsible for the low-affinity transport of potassium into the cell. Likely operates as a K(+):H(+) symporter. This chain is Low affinity potassium transport system protein Kup, found in Escherichia coli (strain K12 / MC4100 / BW2952).